The sequence spans 421 residues: Inner membrane transport protein YdiN (421 aa).

The Cytoplasmic portion of the chain corresponds to 1-9; that stretch reads MSQNKAFST. The chain crosses the membrane as a helical span at residues 10–30; the sequence is PFILAVLCIYFSYFLHGISVI. Residues 31–49 lie on the Periplasmic side of the membrane; sequence TLAQNMSSLAEKFSTDNAG. A helical membrane pass occupies residues 50 to 70; it reads IAYLISGIGLGRLISILFFGV. Residues 71–78 lie on the Cytoplasmic side of the membrane; the sequence is ISDKFGRR. A helical transmembrane segment spans residues 79-99; that stretch reads AVILMAVIMYLLFFFGIPACP. A topological domain (periplasmic) is located at residue Asn100. A helical transmembrane segment spans residues 101–121; that stretch reads LTLAYGLAVCVGIANSALDTG. Over 122–136 the chain is Cytoplasmic; the sequence is GYPALMECFPKASGS. A helical transmembrane segment spans residues 137–157; the sequence is AVILVKAMVSFGQMFYPMLVS. Residues 158 to 163 lie on the Periplasmic side of the membrane; the sequence is YMLLNN. Residues 164–184 form a helical membrane-spanning segment; sequence IWYGYGLIIPGILFVLITLML. Over 185-215 the chain is Cytoplasmic; the sequence is LKSKFPSQLVDASVTNELPQMNSKPLVWLEG. A helical membrane pass occupies residues 216–236; that stretch reads VSSVLFGVAAFSTFYVIVVWM. Over 237–251 the chain is Periplasmic; that stretch reads PKYAMAFAGMSEAEA. The helical transmembrane segment at 252–272 threads the bilayer; it reads LKTISYYSMGSLVCVFIFAAL. Residues 273 to 279 are Cytoplasmic-facing; that stretch reads LKKMVRP. A helical membrane pass occupies residues 280–300; it reads IWANVFNSALATITAAIIYLY. Over 301–308 the chain is Periplasmic; it reads PSPLVCNA. Residues 309 to 329 form a helical membrane-spanning segment; sequence GAFVIGFSAAGGILQLGVSVM. Residues 330–342 lie on the Cytoplasmic side of the membrane; the sequence is SEFFPKSKAKVTS. The chain crosses the membrane as a helical span at residues 343–363; sequence IYMMMGGLANFVIPLITGYLS. Residues 364–369 lie on the Periplasmic side of the membrane; the sequence is NIGLQY. Residues 370 to 390 form a helical membrane-spanning segment; it reads IIVLDFTFALLALITAIIVFI. Residues 391–421 are Cytoplasmic-facing; the sequence is RYYRVFIIPENDVRFGERKFCTRLNTIKHRG.

The protein belongs to the major facilitator superfamily.

It localises to the cell inner membrane. In Escherichia coli (strain K12), this protein is Inner membrane transport protein YdiN (ydiN).